Here is a 517-residue protein sequence, read N- to C-terminus: uncharacterized protein (517 aa).

The next 10 helical transmembrane spans lie at 35–55 (FSLI…IPGI), 81–101 (IAIY…GVFN), 102–122 (IGIS…ILKV), 135–155 (IITI…VAAL), 164–184 (VVSA…LVGT), 223–243 (LVIA…TVFG), 268–288 (FLSF…VYTA), 302–322 (FGIT…LIAL), 328–348 (IVIV…AGLN), and 352–372 (ASLV…MIYI).

It localises to the cell membrane. This is an uncharacterized protein from Mycoplasma pneumoniae (strain ATCC 29342 / M129 / Subtype 1) (Mycoplasmoides pneumoniae).